Reading from the N-terminus, the 1460-residue chain is DNA-binding protein RFX7 (1460 aa).

The tract at residues 1 to 34 (MAEEQQQPPPQQPDAHQQLPPSAPNSGVALPALV) is disordered. The segment at residues 108 to 183 (AFSWIRNTLE…YCYSGLRKKA (76 aa)) is a DNA-binding region (RFX-type winged-helix). A PxLPxI/L motif; mediates interaction with ANKRA2 and RFXANK motif is present at residues 188–193 (PTLPNL). The interval 308–352 (QRKIQKKQQEQKLQSPLPGESAAKKSESATSNGVTNLPNGNPSIL) is disordered. S322 carries the phosphoserine modification. Over residues 337–352 (TSNGVTNLPNGNPSIL) the composition is skewed to polar residues. A Phosphoserine modification is found at S379. Residues 404–416 (SVKQAPKTPQNVP) show a composition bias toward polar residues. The segment at 404 to 428 (SVKQAPKTPQNVPASPGGDRSARHR) is disordered. A phosphoserine mark is found at S418 and S455. The span at 481 to 513 (TPSNSNTPLKHSASVSSATGTTEESRSVPQIKN) shows a compositional bias: polar residues. Disordered stretches follow at residues 481-585 (TPSN…PSNE), 632-715 (TFTS…AQIP), and 917-1015 (QSVT…SVPP). Positions 515-535 (SVVSLQSPGSRSSSAGGTSAV) are enriched in low complexity. Over residues 537 to 549 (VKVEPETSSDEHP) the composition is skewed to basic and acidic residues. 2 stretches are compositionally biased toward polar residues: residues 563-583 (QTPS…QKPS) and 632-644 (TFTS…NGDS). Residue T564 is modified to Phosphothreonine. Residue S662 is modified to Phosphoserine. N6-acetyllysine is present on K704. Polar residues-rich tracts occupy residues 705-715 (TEGSTAGAQIP) and 917-933 (QSVT…SSTH). Pro residues predominate over residues 947 to 963 (TPTPTPTPTPTPTPTPT). The segment covering 971-1009 (GSQSLSRESPCSRLAQTTPVDSALGSSRHTPIGTPHSNC) has biased composition (polar residues). T988 bears the Phosphothreonine mark. 2 positions are modified to phosphoserine: S1178 and S1329.

This sequence belongs to the RFX family. Interacts (via PxLPxI/L motif) with RFXANK (via ankyrin repeats). Interacts (via PxLPxI/L motif) with ANKRA2 (via ankyrin repeats). As to expression, widely expressed in many different tissue types including thymus and placenta, with high expression in brain. Expressed in both inhibitory and excitatory neurons in cortex.

It localises to the nucleus. Transcription factor. Acts as a transcriptional activator by binding to promoter regions of target genes, such as PDCD4, PIK3IP1, MXD4, PNRC1, and RFX5. Plays a role in natural killer (NK) cell maintenance and immunity. May play a role in the process of ciliogenesis in the neural tube and neural tube closure. The chain is DNA-binding protein RFX7 from Homo sapiens (Human).